The chain runs to 557 residues: Ribonuclease J 2 (557 aa).

Residues His-76, His-78, His-144, and Glu-166 each contribute to the Zn(2+) site. 366 to 370 lines the substrate pocket; sequence HASSH.

It belongs to the metallo-beta-lactamase superfamily. RNA-metabolizing metallo-beta-lactamase-like family. Bacterial RNase J subfamily. Homodimer, may be a subunit of the RNA degradosome. Requires Zn(2+) as cofactor.

It localises to the cytoplasm. Its function is as follows. An RNase that has 5'-3' exonuclease and possibly endoonuclease activity. Involved in maturation of rRNA and in some organisms also mRNA maturation and/or decay. In Staphylococcus epidermidis (strain ATCC 35984 / DSM 28319 / BCRC 17069 / CCUG 31568 / BM 3577 / RP62A), this protein is Ribonuclease J 2.